The following is a 678-amino-acid chain: GAS2-like protein 1 (678 aa).

Residue Ala2 is modified to N-acetylalanine. Positions 27–148 (EAMKEDLADW…CLLEVARRGA (122 aa)) constitute a Calponin-homology (CH) domain. Residues 203–275 (NDLRNLDELV…HYLDKHDPCR (73 aa)) enclose the GAR domain. The segment covering 276–291 (CSSSTHRLPQQRTGTF) has biased composition (polar residues). 2 disordered regions span residues 276 to 524 (CSSS…FRRL) and 538 to 678 (AASH…DSSM). Residues Ser306 and Ser316 each carry the phosphoserine modification. Over residues 327 to 340 (GTKEGPETPLRPRD) the composition is skewed to basic and acidic residues. Residue Thr334 is modified to Phosphothreonine. Residues Ser352 and Ser355 each carry the phosphoserine modification. Positions 354–365 (DSDSSASSAQSG) are enriched in low complexity. Positions 370–381 (RSDDSATGSRRE) are enriched in basic and acidic residues. The segment covering 392–403 (PASPRRPTAPRS) has biased composition (low complexity). Phosphoserine is present on Ser394. Residues 404–413 (QSRDRLDRGR) are compositionally biased toward basic and acidic residues. 2 positions are modified to phosphoserine: Ser436 and Ser438. Over residues 437–454 (QSREEQAVLMVRRDRDGQ) the composition is skewed to basic and acidic residues. Over residues 461–471 (GRGGGGSGGSG) the composition is skewed to gly residues. 2 positions are modified to phosphoserine: Ser482 and Ser489. The segment covering 485 to 495 (APRPSRGPSPG) has biased composition (pro residues). An Omega-N-methylarginine modification is found at Arg490. Ser493 bears the Phosphoserine mark. Residue Thr501 is modified to Phosphothreonine. Arg507 bears the Omega-N-methylarginine mark. 2 stretches are compositionally biased toward low complexity: residues 509–519 (PLQLDPQQEQQ) and 554–568 (DSAY…SSLS). Arg630 bears the Omega-N-methylarginine mark. A compositionally biased stretch (basic and acidic residues) spans 631 to 641 (GRMDTQPDRKP). The residue at position 654 (Ser654) is a Phosphoserine. Residues 666-678 (HSVTPRTEPDSSM) are compositionally biased toward polar residues.

This sequence belongs to the GAS2 family. Interacts with MAPRE1.

It is found in the cytoplasm. The protein localises to the cytoskeleton. It localises to the stress fiber. Functionally, seems to be involved in the cross-linking of microtubules and microfilaments. Regulates microtubule dynamics and stability by interacting with microtubule plus-end tracking proteins, such as MAPRE1, to regulate microtubule growth along actin stress fibers. This is GAS2-like protein 1 (Gas2l1) from Mus musculus (Mouse).